The chain runs to 244 residues: DnaJ homolog subfamily C member 4 (244 aa).

Residues 37–102 form the J domain; the sequence is NYYELLGVHP…ESRRNYDHQL (66 aa). Positions 96 to 127 are disordered; sequence RNYDHQLHSASPPKSSGSTAEPKYTQQTHSSW. Residues 103-127 are compositionally biased toward polar residues; sequence HSASPPKSSGSTAEPKYTQQTHSSW. The chain crosses the membrane as a helical span at residues 159 to 178; the sequence is VLGYCLLLMVAGMGLHYVAF. The interval 208 to 244 is disordered; the sequence is RANRARIQQERQQRQQPRAEPSLPPESSRIMPQDTSP.

It is found in the membrane. This chain is DnaJ homolog subfamily C member 4 (Dnajc4), found in Mus musculus (Mouse).